Reading from the N-terminus, the 320-residue chain is Malate dehydrogenase (320 aa).

NAD(+)-binding positions include 10 to 15 (GAGMIG) and Asp-34. Residues Arg-83 and Arg-89 each contribute to the substrate site. Residues Asn-96 and 119-121 (ITN) each bind NAD(+). Residues Asn-121 and Arg-152 each contribute to the substrate site. The active-site Proton acceptor is His-176.

Belongs to the LDH/MDH superfamily. MDH type 3 family.

It catalyses the reaction (S)-malate + NAD(+) = oxaloacetate + NADH + H(+). Functionally, catalyzes the reversible oxidation of malate to oxaloacetate. This Caulobacter vibrioides (strain NA1000 / CB15N) (Caulobacter crescentus) protein is Malate dehydrogenase.